The primary structure comprises 146 residues: MGRFISVSFGLLVLLLSLSGTGANCLPDWSVYEGYCYKVFKERMNWADAEKFCTKQHKDGHLVSFRNSKEVDFVISLAFPMLKNDLVWIGLTDYWRDCNWEWSDGAQLDYKAWDNERHCFIYKNTDNQWTRRDCTWTFSFVCKCPA.

A signal peptide spans 1–23 (MGRFISVSFGLLVLLLSLSGTGA). 3 disulfide bridges follow: C25–C36, C53–C142, and C119–C134. A C-type lectin domain is found at 32-143 (YEGYCYKVFK…CTWTFSFVCK (112 aa)).

It belongs to the snaclec family. As to quaternary structure, heterodimer of subunits alpha and beta; disulfide-linked. Expressed by the venom gland.

It localises to the secreted. Binding of echicetin to glycoprotein Ibalpha (GP1BA) receptor on platelets alone results in inhibition of platelet aggregation, while binding to both GPIba receptor and IgMk promotes platelet aggregation and signal transduction. This Echis carinatus (Saw-scaled viper) protein is Snaclec echicetin subunit beta.